The sequence spans 163 residues: Putative C-type lectin protein FPV239 (163 aa).

Residues 48 to 159 form the C-type lectin domain; the sequence is CKEGWVGYNK…CFLPKKWICR (112 aa). 2 cysteine pairs are disulfide-bonded: C76/C158 and C137/C150.

In Fowlpox virus (strain NVSL) (FPV), this protein is Putative C-type lectin protein FPV239.